A 277-amino-acid chain; its full sequence is Energy-coupling factor transporter ATP-binding protein EcfA (277 aa).

An ABC transporter domain is found at 4-238; the sequence is LETRDLTHIY…PELLTQTRLD (235 aa). 37-44 is a binding site for ATP; sequence GPNGAGKS.

The protein belongs to the ABC transporter superfamily. Energy-coupling factor EcfA family. As to quaternary structure, forms a stable energy-coupling factor (ECF) transporter complex composed of 2 membrane-embedded substrate-binding proteins (S component), 2 ATP-binding proteins (A component) and 2 transmembrane proteins (T component).

It is found in the cell membrane. Functionally, ATP-binding (A) component of a common energy-coupling factor (ECF) ABC-transporter complex. Unlike classic ABC transporters this ECF transporter provides the energy necessary to transport a number of different substrates. The chain is Energy-coupling factor transporter ATP-binding protein EcfA from Methanoculleus marisnigri (strain ATCC 35101 / DSM 1498 / JR1).